The chain runs to 621 residues: Uptake hydrogenase large subunit (621 aa).

Ni(2+)-binding residues include C75, C78, C600, and C603.

Belongs to the [NiFe]/[NiFeSe] hydrogenase large subunit family. In terms of assembly, heterodimer of a large and a small subunit. Requires Ni(2+) as cofactor.

Its subcellular location is the cell membrane. The catalysed reaction is H2 + A = AH2. Functionally, this enzyme recycles the H(2) produced by nitrogenase to increase the production of ATP and to protect nitrogenase against inhibition or damage by O(2) under carbon- or phosphate-limited conditions. The sequence is that of Uptake hydrogenase large subunit (hupL) from Alcaligenes hydrogenophilus.